A 472-amino-acid chain; its full sequence is Probable dipeptidase A (472 aa).

The active site involves cysteine 10.

The protein belongs to the peptidase C69 family.

The catalysed reaction is an L-aminoacyl-L-amino acid + H2O = 2 an L-alpha-amino acid. The polypeptide is Probable dipeptidase A (pepDA) (Streptococcus pyogenes serotype M1).